A 265-amino-acid polypeptide reads, in one-letter code: Phosphatidylglycerol--prolipoprotein diacylglyceryl transferase (265 aa).

4 consecutive transmembrane segments (helical) span residues L17–G37, L56–Y76, W92–F112, and G117–A137. Position 139 (R139) interacts with a 1,2-diacyl-sn-glycero-3-phospho-(1'-sn-glycerol). 3 helical membrane-spanning segments follow: residues P173–Y193, G201–V221, and W235–A255.

The protein belongs to the Lgt family.

It is found in the cell inner membrane. The catalysed reaction is L-cysteinyl-[prolipoprotein] + a 1,2-diacyl-sn-glycero-3-phospho-(1'-sn-glycerol) = an S-1,2-diacyl-sn-glyceryl-L-cysteinyl-[prolipoprotein] + sn-glycerol 1-phosphate + H(+). It participates in protein modification; lipoprotein biosynthesis (diacylglyceryl transfer). In terms of biological role, catalyzes the transfer of the diacylglyceryl group from phosphatidylglycerol to the sulfhydryl group of the N-terminal cysteine of a prolipoprotein, the first step in the formation of mature lipoproteins. This Solidesulfovibrio magneticus (strain ATCC 700980 / DSM 13731 / RS-1) (Desulfovibrio magneticus) protein is Phosphatidylglycerol--prolipoprotein diacylglyceryl transferase.